The sequence spans 298 residues: Glycine--tRNA ligase alpha subunit (298 aa).

It belongs to the class-II aminoacyl-tRNA synthetase family. Tetramer of two alpha and two beta subunits.

The protein resides in the cytoplasm. It catalyses the reaction tRNA(Gly) + glycine + ATP = glycyl-tRNA(Gly) + AMP + diphosphate. The chain is Glycine--tRNA ligase alpha subunit from Helicobacter hepaticus (strain ATCC 51449 / 3B1).